We begin with the raw amino-acid sequence, 340 residues long: Serpentine receptor class alpha-23 (340 aa).

6 helical membrane passes run 34 to 54 (FISTIVLISYCFSWLAIQALW), 114 to 136 (YFYYLTNYFSTYSVFSLTFDRLI), 150 to 170 (FIAISLLVLQFLLAILSFYIA), 199 to 219 (VRTVVMVSCIIVTGFAYYLSV), 250 to 270 (ILIVLQFSCTMISSFGVNLLL), and 284 to 304 (VGAFLPGVAYANLCLPLAIYF).

It belongs to the nematode receptor-like protein sra family.

The protein localises to the membrane. The chain is Serpentine receptor class alpha-23 (sra-23) from Caenorhabditis elegans.